Reading from the N-terminus, the 134-residue chain is Phosphoribosyl-AMP cyclohydrolase (134 aa).

Residue Asp-80 participates in Mg(2+) binding. Cys-81 is a binding site for Zn(2+). Asp-82 and Asp-84 together coordinate Mg(2+). Zn(2+) contacts are provided by Cys-98 and Cys-105.

This sequence belongs to the PRA-CH family. As to quaternary structure, homodimer. Mg(2+) is required as a cofactor. Zn(2+) serves as cofactor.

It is found in the cytoplasm. It catalyses the reaction 1-(5-phospho-beta-D-ribosyl)-5'-AMP + H2O = 1-(5-phospho-beta-D-ribosyl)-5-[(5-phospho-beta-D-ribosylamino)methylideneamino]imidazole-4-carboxamide. The protein operates within amino-acid biosynthesis; L-histidine biosynthesis; L-histidine from 5-phospho-alpha-D-ribose 1-diphosphate: step 3/9. Catalyzes the hydrolysis of the adenine ring of phosphoribosyl-AMP. In Bordetella pertussis (strain Tohama I / ATCC BAA-589 / NCTC 13251), this protein is Phosphoribosyl-AMP cyclohydrolase.